We begin with the raw amino-acid sequence, 316 residues long: Ribosomal RNA small subunit methyltransferase H (316 aa).

S-adenosyl-L-methionine contacts are provided by residues 35–37, Asp55, Phe84, Asp105, and Gln112; that span reads SGH.

Belongs to the methyltransferase superfamily. RsmH family.

The protein localises to the cytoplasm. The enzyme catalyses cytidine(1402) in 16S rRNA + S-adenosyl-L-methionine = N(4)-methylcytidine(1402) in 16S rRNA + S-adenosyl-L-homocysteine + H(+). Functionally, specifically methylates the N4 position of cytidine in position 1402 (C1402) of 16S rRNA. The chain is Ribosomal RNA small subunit methyltransferase H from Streptococcus pyogenes serotype M6 (strain ATCC BAA-946 / MGAS10394).